Consider the following 383-residue polypeptide: Methenyltetrahydrofolate synthase domain-containing protein (383 aa).

The interval 249–301 (AGKDVTLQGEHQHLPEPGCQQTVPLSVGRRPPDTPGPETNSMEAAPGSPPGEG) is disordered. Positions 306–379 (ADVYVGNLPG…DTLRVALARQ (74 aa)) constitute an RRM domain.

This is Methenyltetrahydrofolate synthase domain-containing protein (MTHFSD) from Homo sapiens (Human).